A 232-amino-acid chain; its full sequence is Protein lin-7 homolog A (232 aa).

A Kinase interacting site motif is present at residues 14-28 (MATLTVVQPLTLDRD). The 56-residue stretch at 25–80 (LDRDVARAIELLEKLQESGEVPVHKLQSLKKVLQSEFCTAIREVYQYMHETITVNG) folds into the L27 domain. Residues 108–190 (VVELPKTDEG…SVKLVVRYTP (83 aa)) form the PDZ domain.

The protein belongs to the lin-7 family. As to quaternary structure, forms a complex with CASK and CASKIN1. Component of the brain-specific heterotrimeric complex (LIN-10-LIN-2-LIN-7 complex) composed of at least APBA1, CASK, and LIN7, which associates with the motor protein KIF17 to transport vesicles along microtubules. Can also interact with other modular proteins containing protein-protein interaction domains like PALS1, PALS2, MPP7, DLG1, DLG2 and DLG3 through its L27 domain. Interacts with DLG4 and GRIN2B as well as CDH1 and CTNNB1, the channels KCNJ12/Kir2.2, KCNJ4/Kir2.3 and probably KCNJ2/Kir2.1 and SLC6A12/BGT-1 via its PDZ domain. The association of LIN7A with cadherin and beta-catenin is calcium-dependent, occurs at synaptic junctions and requires the actin cytoskeleton. Interacts with EGFR, ERBB2, ERBB3 and ERBB4 with both PDZ and KID domains. Associates with KIF17 via APBA1. Interacts with HTR4. Forms a tripartite complex composed of DLG1, MPP7 and LIN7 (LIN7A or LIN7C). Interacts with MARCHF11. As to expression, ubiquitously expressed in brain and detected in lung, liver and testis (at protein level). Expression was detected only in brain.

Its subcellular location is the cell membrane. The protein localises to the basolateral cell membrane. The protein resides in the cell junction. It localises to the postsynaptic density membrane. It is found in the tight junction. Functionally, plays a role in establishing and maintaining the asymmetric distribution of channels and receptors at the plasma membrane of polarized cells. Forms membrane-associated multiprotein complexes that may regulate delivery and recycling of proteins to the correct membrane domains. The tripartite complex composed of LIN7 (LIN7A, LIN7B or LIN7C), CASK and APBA1 associates with the motor protein KIF17 to transport vesicles containing N-methyl-D-aspartate (NMDA) receptor subunit NR2B along microtubules. This complex may have the potential to couple synaptic vesicle exocytosis to cell adhesion in brain. Ensures the proper localization of GRIN2B (subunit 2B of the NMDA receptor) to neuronal postsynaptic density and may function in localizing synaptic vesicles at synapses where it is recruited by beta-catenin and cadherin. Required to localize Kir2 channels, GABA transporter (SLC6A12) and EGFR/ERBB1, ERBB2, ERBB3 and ERBB4 to the basolateral membrane of epithelial cells. The chain is Protein lin-7 homolog A (Lin7a) from Rattus norvegicus (Rat).